The following is a 273-amino-acid chain: Cell division cycle-associated protein 3 (273 aa).

2 disordered regions span residues 1-231 (MGST…ALSE) and 251-273 (GGGA…LMES). A phosphoserine mark is found at Ser29 and Ser31. Residues 32 to 45 (AGIQRTPIQVESSP) are compositionally biased toward polar residues. The residue at position 37 (Thr37) is a Phosphothreonine. Phosphoserine occurs at positions 44 and 67. Thr75 is modified (phosphothreonine). Residues 90–124 (KELSEVFETEVSETEVSESISSPVLGLPQETPLSS) are F-box-like. Residue Ser93 is modified to Phosphoserine. The segment covering 94 to 105 (EVFETEVSETEV) has biased composition (acidic residues). Composition is skewed to polar residues over residues 144 to 154 (PWSQTELNSKQ) and 164 to 175 (STETMVSGQTSD). Ser204 carries the post-translational modification Phosphoserine. Thr207 is modified (phosphothreonine). Over residues 210 to 220 (QDDNSPGTLTL) the composition is skewed to polar residues. A Phosphoserine modification is found at Ser214. Position 217 is a phosphothreonine (Thr217). The KEN box motif lies at 263–265 (KEN).

In terms of assembly, interacts with SKP1. Part of a SCF (SKP1-cullin-F-box) protein ligase complex. Post-translationally, ubiquitinated and degraded by the APC/C-Cdh1 complex.

Its subcellular location is the cytoplasm. The protein resides in the cytosol. It participates in protein modification; protein ubiquitination. Its function is as follows. F-box-like protein which is required for entry into mitosis. Acts by participating in E3 ligase complexes that mediate the ubiquitination and degradation of WEE1 kinase at G2/M phase. The protein is Cell division cycle-associated protein 3 (Cdca3) of Rattus norvegicus (Rat).